The chain runs to 954 residues: Glycine dehydrogenase (decarboxylating) (954 aa).

An N6-(pyridoxal phosphate)lysine modification is found at Lys706.

The protein belongs to the GcvP family. The glycine cleavage system is composed of four proteins: P, T, L and H. Requires pyridoxal 5'-phosphate as cofactor.

It carries out the reaction N(6)-[(R)-lipoyl]-L-lysyl-[glycine-cleavage complex H protein] + glycine + H(+) = N(6)-[(R)-S(8)-aminomethyldihydrolipoyl]-L-lysyl-[glycine-cleavage complex H protein] + CO2. Functionally, the glycine cleavage system catalyzes the degradation of glycine. The P protein binds the alpha-amino group of glycine through its pyridoxal phosphate cofactor; CO(2) is released and the remaining methylamine moiety is then transferred to the lipoamide cofactor of the H protein. The polypeptide is Glycine dehydrogenase (decarboxylating) (Pseudomonas syringae pv. tomato (strain ATCC BAA-871 / DC3000)).